The sequence spans 296 residues: 33 kDa chaperonin (296 aa).

Disulfide bonds link C233–C235 and C267–C270.

Belongs to the HSP33 family. Post-translationally, under oxidizing conditions two disulfide bonds are formed involving the reactive cysteines. Under reducing conditions zinc is bound to the reactive cysteines and the protein is inactive.

The protein resides in the cytoplasm. In terms of biological role, redox regulated molecular chaperone. Protects both thermally unfolding and oxidatively damaged proteins from irreversible aggregation. Plays an important role in the bacterial defense system toward oxidative stress. This chain is 33 kDa chaperonin, found in Actinobacillus pleuropneumoniae serotype 7 (strain AP76).